Reading from the N-terminus, the 447-residue chain is Dihydroorotase (447 aa).

H81 and H83 together coordinate Zn(2+). Residues 83–85 (HFR) and N115 each bind substrate. 3 residues coordinate Zn(2+): D171, H198, and H252. N298 contributes to the substrate binding site. D325 contributes to the Zn(2+) binding site. D325 is a catalytic residue. Substrate-binding positions include H329 and 343-344 (FG).

Belongs to the metallo-dependent hydrolases superfamily. DHOase family. Class I DHOase subfamily. Zn(2+) serves as cofactor.

It carries out the reaction (S)-dihydroorotate + H2O = N-carbamoyl-L-aspartate + H(+). It participates in pyrimidine metabolism; UMP biosynthesis via de novo pathway; (S)-dihydroorotate from bicarbonate: step 3/3. Its function is as follows. Catalyzes the reversible cyclization of carbamoyl aspartate to dihydroorotate. The protein is Dihydroorotase of Ehrlichia chaffeensis (strain ATCC CRL-10679 / Arkansas).